Reading from the N-terminus, the 866-residue chain is Retinoblastoma-related protein 2 (866 aa).

The segment at 274 to 475 is domain A; the sequence is TPITSAMTTA…EKGSSLYNSL (202 aa). The pocket stretch occupies residues 274–721; it reads TPITSAMTTA…NEVFVPAAKP (448 aa). The tract at residues 476-593 is spacer; that stretch reads IVARPSVASE…PVGGNEKCAD (118 aa). The tract at residues 513–551 is disordered; it reads LPATPSKKRAAGRDDNADPRSPKRPCNESRSPVVEHNLQ. Basic and acidic residues predominate over residues 523-539; sequence AGRDDNADPRSPKRPCN. Positions 594 to 721 are domain B; that stretch reads VTIQIFFSKI…NEVFVPAAKP (128 aa). 2 disordered regions span residues 731 to 754 and 839 to 866; these read TRPE…PFPN and SLGQ…KPDT. Residues 841–850 show a composition bias toward polar residues; that stretch reads GQPNGGSTSL.

It belongs to the retinoblastoma protein (RB) family. In terms of tissue distribution, ubiquitous.

The protein resides in the nucleus. Its function is as follows. Regulator of biological processes that recruits a histone deacetylase to control gene transcription. May play a role in the entry into mitosis, negatively regulating the cell proliferation. Formation of stable complexes with geminiviridae replication-associated proteins may create a cellular environment which favors viral DNA replication. This Zea mays (Maize) protein is Retinoblastoma-related protein 2 (RBR2).